A 576-amino-acid polypeptide reads, in one-letter code: Sulfite reductase [NADPH] hemoprotein beta-component (576 aa).

Residues Cys435, Cys441, Cys480, and Cys484 each coordinate [4Fe-4S] cluster. Siroheme is bound at residue Cys484.

This sequence belongs to the nitrite and sulfite reductase 4Fe-4S domain family. Alpha(8)-beta(8). The alpha component is a flavoprotein, the beta component is a hemoprotein. Siroheme is required as a cofactor. [4Fe-4S] cluster serves as cofactor.

The enzyme catalyses hydrogen sulfide + 3 NADP(+) + 3 H2O = sulfite + 3 NADPH + 4 H(+). Its pathway is sulfur metabolism; hydrogen sulfide biosynthesis; hydrogen sulfide from sulfite (NADPH route): step 1/1. Functionally, component of the sulfite reductase complex that catalyzes the 6-electron reduction of sulfite to sulfide. This is one of several activities required for the biosynthesis of L-cysteine from sulfate. The sequence is that of Sulfite reductase [NADPH] hemoprotein beta-component from Photorhabdus laumondii subsp. laumondii (strain DSM 15139 / CIP 105565 / TT01) (Photorhabdus luminescens subsp. laumondii).